A 446-amino-acid chain; its full sequence is NADH-dependent phenylglyoxylate dehydrogenase subunit beta (446 aa).

4Fe-4S ferredoxin-type domains lie at 6-35 (STIAFDPAKCDGCGDCMTACAQAKTGTDDI), 49-80 (ADKTFELALCRQCADPKCVTVCPAGALNKDGT), 82-111 (GVIGWDATKCVDCLLCTVGCAYAGIALDEA), and 109-141 (DEATGHVAKCDTCDGNPACVPACPHGALKHITT).

As to quaternary structure, dimer of heteropentamers composed of an alpha (PadG), a beta (PadI), a gamma (PadE), a delta (PadF) and an epsilon (PadH) subunit. [4Fe-4S] cluster is required as a cofactor.

It catalyses the reaction phenylglyoxylate + NAD(+) + CoA = benzoyl-CoA + CO2 + NADH. Activated by magnesium ions and thiamine diphosphate. Involved in the anaerobic metabolism of phenylalanine and phenylacetate. Catalyzes the oxidative decarboxylation of phenylglyoxylate to benzoyl-CoA and CO(2). It can also react slowly with 2-oxo-3-methylbutanoate and use different electron acceptors such as benzyl viologen, methyl viologen, FAD or FMN, but NAD seems to be the physiological electron acceptor. Also catalyzes an isotope exchange between CO(2) and the carboxyl group which proves partial or complete reversibility of the oxidative decarboxylation reaction. The chain is NADH-dependent phenylglyoxylate dehydrogenase subunit beta (padI) from Aromatoleum evansii (Azoarcus evansii).